A 2470-amino-acid polypeptide reads, in one-letter code: Serine/threonine-protein kinase mTor (2470 aa).

HEAT repeat units lie at residues 172–209 (QHILTFFEVIFNAIFDPKPAIRESAGEALRAALIVTAQ), 746–785 (SYMNPILKALVPKLHEPESNPGVILNVLRTIGDLAEVNGG), 791–829 (LWADDLLSILLEMLGDAGSPDKRGVALWTLGQLISATGR), 835–873 (HKYPVLIDILINFLKTEQRRSIRRETIRVLGLLGAMDPY), 962–999 (PYLAQVLPNLLDNVRTADNNLREFLFQQLAILVAFVKL), 1043–1080 (DYLAELIPQILRVLQHDNSKDRMVTRRLLQALQKFGST), 1083–1122 (YYLPLILPPIVKLFDSPYVPQQVSMVALETINNLACQLDF), and 1124–1160 (DFSSRIIHPLVRVLDAEPELRDQAMTTLRSLAKQLGK). Positions 1349–1903 (LLGTRAMACR…VYPLTVASKS (555 aa)) constitute an FAT domain. TPR repeat units follow at residues 1407 to 1440 (ANELNVQGRWYEKLHNWDEALEHYERNLKTDSSD) and 1718 to 1751 (MATWQNKLQDSIRPDAIQGALECFEKATSYDPNW). The stretch at 1854–1891 (NTWLQVIPQLIARIDTHRQLVGQLIHQLLMDIGKNHPQ) is one HEAT 9 repeat. The PI3K/PI4K catalytic domain maps to 2077 to 2389 (IKTNLQVITS…SLSNSVEDSL (313 aa)). A G-loop region spans residues 2083 to 2089 (VITSKQR). Residues 2256 to 2264 (GLGDRHPSN) are catalytic loop. Residues 2276–2301 (HIDFGDCFEVAMTREKFPEKIPFRLT) form an activation loop region. Residues 2364–2389 (AGAGAPGGRGGSGMQDSLSNSVEDSL) are disordered. The segment covering 2367–2376 (GAPGGRGGSG) has biased composition (gly residues). A compositionally biased stretch (polar residues) spans 2377-2386 (MQDSLSNSVE). Positions 2438-2470 (KSVNEQSQVELLIQQATNNENLCQCYIGWCPFW) constitute an FATC domain.

It belongs to the PI3/PI4-kinase family. May be part of a minimal complex, TORC1, consisting of mTor, raptor and lst8. May be part of a minimal complex, TORC2, consisting of mTor, rictor and lst8. Self-associates; assembles into homomultimeric complexes. Component of a multiprotein complex.

The catalysed reaction is L-seryl-[protein] + ATP = O-phospho-L-seryl-[protein] + ADP + H(+). It catalyses the reaction L-threonyl-[protein] + ATP = O-phospho-L-threonyl-[protein] + ADP + H(+). Functionally, promotes cell and tissue growth, maintains tissue homeostatis and controls responses to environmental stress and aging. Regulates growth during animal development by coupling growth factor signaling to nutrient availability. Central regulators of autophagy. May be involved in atg1 phosphorylation. May also be involved, directly or indirectly, in the control of neuronal function. Phosphorylates S6K/p70S6K, in vitro. May regulate the activity of S6K. Overexpression inhibits growth and reduces cell size. Affects the timing of neuronal cell differentiation. Hyperactivation of the signaling leads to accelerated differentiation, whereas inhibition of the signaling retards differentiation. Thus, in addition to controlling growth of the cell in which it resides, it can also influence growth of distant cells and organs during development via a humoral mechanism. As part of the TORC1 complex regulates energy homeostasis and promotes certain aspects of larval growth by negatively regulating REPTOR. REPTOR functions downstream of TORC1 to regulate the expression of stress response genes in response to TORC1 inhibition resulting from nutrient deprivation. When TORC1 activity is high it phosphorylates REPTOR which inhibits its recruitment into the nucleus and antagonizes their function. This function is essential under normal feeding conditions to promote TORC1-dependent growth during larval development and, in adults and larvae to prevent the REPTOR-dependent expression of nutrient stress response genes. In short, during development, it primarily controls growth, whereas in the adult, where there is relatively little growth, it controls aging and other aspects of nutrient-related physiology. Rag GTPases act as activators of TORC1 in response to amino acid signals. The chain is Serine/threonine-protein kinase mTor from Drosophila melanogaster (Fruit fly).